We begin with the raw amino-acid sequence, 727 residues long: Polyribonucleotide nucleotidyltransferase (727 aa).

Positions 491 and 497 each coordinate Mg(2+). The KH domain maps to 558–617 (PRIITASIHPDKIREVIGPGGKTIKKIIDETGVKIDIEDDGRVFISAVDGEAGENALKII). An S1 motif domain is found at 627-701 (GRIYNGRVTR…KQGRLNLSRK (75 aa)). The tract at residues 698–727 (LSRKEALPNPNPSSNPNPNGITANRNPRNS) is disordered. The segment covering 717-727 (GITANRNPRNS) has biased composition (polar residues).

It belongs to the polyribonucleotide nucleotidyltransferase family. Mg(2+) is required as a cofactor.

The protein resides in the cytoplasm. The enzyme catalyses RNA(n+1) + phosphate = RNA(n) + a ribonucleoside 5'-diphosphate. In terms of biological role, involved in mRNA degradation. Catalyzes the phosphorolysis of single-stranded polyribonucleotides processively in the 3'- to 5'-direction. This Desulfitobacterium hafniense (strain Y51) protein is Polyribonucleotide nucleotidyltransferase.